The chain runs to 149 residues: 18 kDa antigen 1 (149 aa).

The sHSP domain maps to 21 to 131 (TAARPAVMPM…KPRKIAVGRG (111 aa)).

This sequence belongs to the small heat shock protein (HSP20) family.

Not known. This protein is one of the major immune reactive proteins in mycobacteria. This is 18 kDa antigen 1 from Mycobacterium intracellulare.